The sequence spans 206 residues: Ribosomal RNA large subunit methyltransferase E (206 aa).

5 residues coordinate S-adenosyl-L-methionine: G60, W62, D80, D96, and D121. K161 (proton acceptor) is an active-site residue.

Belongs to the class I-like SAM-binding methyltransferase superfamily. RNA methyltransferase RlmE family.

Its subcellular location is the cytoplasm. The catalysed reaction is uridine(2552) in 23S rRNA + S-adenosyl-L-methionine = 2'-O-methyluridine(2552) in 23S rRNA + S-adenosyl-L-homocysteine + H(+). Functionally, specifically methylates the uridine in position 2552 of 23S rRNA at the 2'-O position of the ribose in the fully assembled 50S ribosomal subunit. The chain is Ribosomal RNA large subunit methyltransferase E from Nitrosospira multiformis (strain ATCC 25196 / NCIMB 11849 / C 71).